Here is a 417-residue protein sequence, read N- to C-terminus: NADH-quinone oxidoreductase subunit D (417 aa).

Belongs to the complex I 49 kDa subunit family. In terms of assembly, NDH-1 is composed of 14 different subunits. Subunits NuoB, C, D, E, F, and G constitute the peripheral sector of the complex.

Its subcellular location is the cell inner membrane. The catalysed reaction is a quinone + NADH + 5 H(+)(in) = a quinol + NAD(+) + 4 H(+)(out). NDH-1 shuttles electrons from NADH, via FMN and iron-sulfur (Fe-S) centers, to quinones in the respiratory chain. The immediate electron acceptor for the enzyme in this species is believed to be ubiquinone. Couples the redox reaction to proton translocation (for every two electrons transferred, four hydrogen ions are translocated across the cytoplasmic membrane), and thus conserves the redox energy in a proton gradient. In Paraburkholderia phytofirmans (strain DSM 17436 / LMG 22146 / PsJN) (Burkholderia phytofirmans), this protein is NADH-quinone oxidoreductase subunit D.